The primary structure comprises 392 residues: Chaperone protein DnaJ (392 aa).

One can recognise a J domain in the interval 2-67 (DYYTILGVAK…QKRESYDRYG (66 aa)). The CR-type zinc-finger motif lies at 149 to 227 (GVEKELLVSG…CRGQGRIKDK (79 aa)). Residues Cys-162, Cys-165, Cys-179, Cys-182, Cys-201, Cys-204, Cys-215, and Cys-218 each contribute to the Zn(2+) site. CXXCXGXG motif repeat units lie at residues 162 to 169 (CDACSGSG), 179 to 186 (CDRCKGSG), 201 to 208 (CPDCSGEG), and 215 to 222 (CSECRGQG).

It belongs to the DnaJ family. Homodimer. The cofactor is Zn(2+).

The protein localises to the cytoplasm. Participates actively in the response to hyperosmotic and heat shock by preventing the aggregation of stress-denatured proteins and by disaggregating proteins, also in an autonomous, DnaK-independent fashion. Unfolded proteins bind initially to DnaJ; upon interaction with the DnaJ-bound protein, DnaK hydrolyzes its bound ATP, resulting in the formation of a stable complex. GrpE releases ADP from DnaK; ATP binding to DnaK triggers the release of the substrate protein, thus completing the reaction cycle. Several rounds of ATP-dependent interactions between DnaJ, DnaK and GrpE are required for fully efficient folding. Also involved, together with DnaK and GrpE, in the DNA replication of plasmids through activation of initiation proteins. The polypeptide is Chaperone protein DnaJ (Chlamydia muridarum (strain MoPn / Nigg)).